Here is a 958-residue protein sequence, read N- to C-terminus: Valine--tRNA ligase (958 aa).

A 'HIGH' region motif is present at residues 45 to 55; that stretch reads PNVTGSLHMGH. The 'KMSKS' region signature appears at 571–575; the sequence is KMSKS. ATP is bound at residue K574. Residues 892–958 adopt a coiled-coil conformation; that stretch reads AAERTRLDKE…EALERLKQAS (67 aa).

Belongs to the class-I aminoacyl-tRNA synthetase family. ValS type 1 subfamily. As to quaternary structure, monomer.

The protein localises to the cytoplasm. The catalysed reaction is tRNA(Val) + L-valine + ATP = L-valyl-tRNA(Val) + AMP + diphosphate. Its function is as follows. Catalyzes the attachment of valine to tRNA(Val). As ValRS can inadvertently accommodate and process structurally similar amino acids such as threonine, to avoid such errors, it has a 'posttransfer' editing activity that hydrolyzes mischarged Thr-tRNA(Val) in a tRNA-dependent manner. The sequence is that of Valine--tRNA ligase from Bradyrhizobium diazoefficiens (strain JCM 10833 / BCRC 13528 / IAM 13628 / NBRC 14792 / USDA 110).